We begin with the raw amino-acid sequence, 997 residues long: Frequency clock protein (997 aa).

Disordered regions lie at residues 1 to 153, 214 to 311, 381 to 447, 524 to 590, 665 to 694, 889 to 908, and 975 to 997; these read MADS…HSSS, FAAS…LLPH, GENP…DLDP, SSDG…SRSP, DLSGEPGDMSPTEQMTATGEQEASGSGDEA, EESFSEGQMSRRANPHFSDN, and SSVATAGGAESGYSSSMEDVSSS. Positions 74–94 are enriched in polar residues; it reads GESNDTGQSDPKSWFDQSNRN. The segment covering 115–125 has biased composition (basic and acidic residues); sequence KETDSSNEDSR. Residues 138 to 152 are compositionally biased toward polar residues; the sequence is DTQTQGFRATVAHSS. The span at 227 to 237 shows a compositional bias: basic residues; sequence QRRKAGRHGKA. Residues 239-261 are compositionally biased toward low complexity; that stretch reads HSSGVSLSKHDSSSSSRSRPVDS. Over residues 264–275 the composition is skewed to polar residues; sequence ASMSTGRSSHAA. The segment covering 277-294 has biased composition (low complexity); sequence SSGPSLGRPSLSSKSTSS. Residues 391-402 are compositionally biased toward polar residues; sequence KGATSASNSGGD. Residues 410-421 show a composition bias toward gly residues; that stretch reads VTAGGDGNGSGG. Residues 438–447 are compositionally biased toward basic and acidic residues; it reads RPTRPRDLDP. A Nuclear localization signal motif is present at residues 569 to 573; sequence RKKQK. Polar residues predominate over residues 675–688; that stretch reads PTEQMTATGEQEAS. Residues 986–997 are compositionally biased toward polar residues; sequence GYSSSMEDVSSS.

Belongs to the FRQ family.

It localises to the nucleus. Functionally, circadian clock component involved in the generation of biological rhythms, in particular in rhythm stability, period length, and temperature compensation. Behaves as a negative element in circadian transcriptional loop. The protein is Frequency clock protein (FRQ) of Sordaria fimicola.